The primary structure comprises 583 residues: Arginine--tRNA ligase (583 aa).

Positions 121-131 (ANPTGPLHLGH) match the 'HIGH' region motif.

Belongs to the class-I aminoacyl-tRNA synthetase family. Monomer.

The protein resides in the cytoplasm. It catalyses the reaction tRNA(Arg) + L-arginine + ATP = L-arginyl-tRNA(Arg) + AMP + diphosphate. This chain is Arginine--tRNA ligase (argS), found in Aquifex aeolicus (strain VF5).